Reading from the N-terminus, the 121-residue chain is Large ribosomal subunit protein uL18 (121 aa).

It belongs to the universal ribosomal protein uL18 family. Part of the 50S ribosomal subunit; part of the 5S rRNA/L5/L18/L25 subcomplex. Contacts the 5S and 23S rRNAs.

This is one of the proteins that bind and probably mediate the attachment of the 5S RNA into the large ribosomal subunit, where it forms part of the central protuberance. In Burkholderia mallei (strain NCTC 10247), this protein is Large ribosomal subunit protein uL18.